The sequence spans 292 residues: NAD kinase (292 aa).

D64 (proton acceptor) is an active-site residue. NAD(+) is bound by residues 64-65 (DG), 138-139 (ND), R149, R166, D168, 179-184 (TGYAVS), and Q238.

It belongs to the NAD kinase family. A divalent metal cation serves as cofactor.

Its subcellular location is the cytoplasm. The catalysed reaction is NAD(+) + ATP = ADP + NADP(+) + H(+). Involved in the regulation of the intracellular balance of NAD and NADP, and is a key enzyme in the biosynthesis of NADP. Catalyzes specifically the phosphorylation on 2'-hydroxyl of the adenosine moiety of NAD to yield NADP. The polypeptide is NAD kinase (Oleidesulfovibrio alaskensis (strain ATCC BAA-1058 / DSM 17464 / G20) (Desulfovibrio alaskensis)).